The sequence spans 351 residues: Putative phospho-N-acetylmuramoyl-pentapeptide-transferase (351 aa).

10 helical membrane passes run 2–22 (MEFL…TLFI), 44–64 (AGTP…VTVL), 71–91 (LVLT…DDLL), 158–178 (GEKI…GAVG), 181–201 (GGFY…VGAI), 212–232 (GMAA…LGLS), 235–255 (ALPF…NRHP), 258–278 (IFMG…AVML), 281–301 (TVYF…VSLL), and 328–348 (IVLL…YMTG).

This sequence belongs to the glycosyltransferase 4 family. MraY subfamily. Mg(2+) is required as a cofactor.

It localises to the cell membrane. It catalyses the reaction UDP-N-acetyl-alpha-D-muramoyl-L-alanyl-gamma-D-glutamyl-meso-2,6-diaminopimeloyl-D-alanyl-D-alanine + di-trans,octa-cis-undecaprenyl phosphate = di-trans,octa-cis-undecaprenyl diphospho-N-acetyl-alpha-D-muramoyl-L-alanyl-D-glutamyl-meso-2,6-diaminopimeloyl-D-alanyl-D-alanine + UMP. This is Putative phospho-N-acetylmuramoyl-pentapeptide-transferase from Methanothermobacter thermautotrophicus (strain ATCC 29096 / DSM 1053 / JCM 10044 / NBRC 100330 / Delta H) (Methanobacterium thermoautotrophicum).